A 451-amino-acid polypeptide reads, in one-letter code: Trigger factor (451 aa).

The PPIase FKBP-type domain occupies 173-258 (GDRVTVDFVG…LKKVEWAHLP (86 aa)).

Belongs to the FKBP-type PPIase family. Tig subfamily.

The protein resides in the cytoplasm. The enzyme catalyses [protein]-peptidylproline (omega=180) = [protein]-peptidylproline (omega=0). Involved in protein export. Acts as a chaperone by maintaining the newly synthesized protein in an open conformation. Functions as a peptidyl-prolyl cis-trans isomerase. This is Trigger factor from Cupriavidus taiwanensis (strain DSM 17343 / BCRC 17206 / CCUG 44338 / CIP 107171 / LMG 19424 / R1) (Ralstonia taiwanensis (strain LMG 19424)).